Here is a 261-residue protein sequence, read N- to C-terminus: Orotidine 5'-phosphate decarboxylase (261 aa).

Substrate is bound by residues aspartate 34, 56-58 (KTH), 88-97 (DRKFADIGNT), tyrosine 214, and arginine 232. The active-site Proton donor is lysine 90.

This sequence belongs to the OMP decarboxylase family.

It catalyses the reaction orotidine 5'-phosphate + H(+) = UMP + CO2. Its pathway is pyrimidine metabolism; UMP biosynthesis via de novo pathway; UMP from orotate: step 2/2. This chain is Orotidine 5'-phosphate decarboxylase (URA3), found in Kodamaea ohmeri (Yeast).